We begin with the raw amino-acid sequence, 312 residues long: Pantothenate kinase (312 aa).

97-104 (GSVAVGKS) is an ATP binding site.

It belongs to the prokaryotic pantothenate kinase family.

The protein resides in the cytoplasm. The enzyme catalyses (R)-pantothenate + ATP = (R)-4'-phosphopantothenate + ADP + H(+). Its pathway is cofactor biosynthesis; coenzyme A biosynthesis; CoA from (R)-pantothenate: step 1/5. This chain is Pantothenate kinase, found in Mycolicibacterium vanbaalenii (strain DSM 7251 / JCM 13017 / BCRC 16820 / KCTC 9966 / NRRL B-24157 / PYR-1) (Mycobacterium vanbaalenii).